We begin with the raw amino-acid sequence, 129 residues long: ATP synthase epsilon chain (129 aa).

It belongs to the ATPase epsilon chain family. In terms of assembly, F-type ATPases have 2 components, CF(1) - the catalytic core - and CF(0) - the membrane proton channel. CF(1) has five subunits: alpha(3), beta(3), gamma(1), delta(1), epsilon(1). CF(0) has three main subunits: a, b and c.

It localises to the cell inner membrane. Its function is as follows. Produces ATP from ADP in the presence of a proton gradient across the membrane. This is ATP synthase epsilon chain from Nitratiruptor sp. (strain SB155-2).